A 1070-amino-acid chain; its full sequence is MPKRDDIKTILVIGSGPIVIGQAAEFDYAGTQACLSLKEEGYRVVLVNSNPATIMTDAEMADKVYIEPITLDFVSRIIRKERPDAILPTLGGQTGLNMAMELSAAGILDECNVEVLGTDLTAIKKAEDREAFRDLMNELGEPVPESDIIHNLDEAYTFVERIGYPVIVRPAYTLGGSGGGICHNEQELIETVTSGLKLSPVTQCLLEKSIAGFKEVEYEVMRDANNNAMVVCNMENIDPVGIHTGDSIVVAPSQTLSDREYQLLRDVSLKIIRALEIEGGCNVQLALDPDSYNYYVIEVNPRVSRSSALASKATGYPIAKLAAKIAVGLTLDEVRNPVTGTTFAHFEPTLDYVVAKIPRFAFDKFEQADRRLGTQMKATGEVMAIGRSWEEALLKAVRSLEIGADHLLLEEAENADEATLERKICFPEDDRLFFLAAALRRGQTIEQLHAKTKIDLFFLYKLSKTIELENRIKENPQNQEILAEAKRAGFSDAFLATCWNVDEQAIYDLRKAQNLFPVYKMVDTCAAEFESTTPYFYSTYEEENESTRSAKESVIVLGSGPIRIGQGVEFDYATVHSVWAIQQAGYEAIIINNNPETVSTDFSISDKLYFEPLTLEDVMHVIEIEQPLGVVVQFGGQTAINLADGLAKRGVKILGTSLEDTDRAENRDAFEKALGILQIPQPAGKTATSVEEAINVATDIGYPVLVRPSYVLGGRAMEIVESEEALKHYMTNAVKVNPKHPVLVDRYVSGQEVEVDAISDGENVLIPGIMEHIERAGVHSGDSIAVYPAQRLSSQVKNTIVDYTTRLATGLNIIGMLNIQYVVDGEEVFVIEVNPRSSRTAPFLSKITEIPMANVATRVILGENLIDLGYTPGLAPEKQEIFVKVPVFSFAKLRSVDTSLGPEMKSTGEVMGKDVTLEKALYKGFVASGTTMHDYGTVLLTVADRDKEEAVELAKRFNRIGFTIMATKGTASTLEEADIPVSQVKKIGENQETLIDYIRNGQVTLVVNTLTTGKRPERDGFQIRRESVENGIPVCTSLDTAEAILRVLESRSFELESMNTSEVKQPKARV.

The interval Met-1–Glu-401 is carboxyphosphate synthetic domain. Positions 129, 169, 175, 176, 208, 210, 215, 241, 242, 243, 284, and 298 each coordinate ATP. Positions Arg-133–Val-327 constitute an ATP-grasp 1 domain. 3 residues coordinate Mg(2+): Gln-284, Glu-298, and Asn-300. The Mn(2+) site is built by Gln-284, Glu-298, and Asn-300. Residues Ile-402–Ser-546 form an oligomerization domain region. The segment at Thr-547–Gly-929 is carbamoyl phosphate synthetic domain. The region spanning Glu-671–Leu-861 is the ATP-grasp 2 domain. Positions 707, 746, 748, 752, 777, 778, 779, 780, 820, and 832 each coordinate ATP. Residues Gln-820, Glu-832, and Asn-834 each contribute to the Mg(2+) site. Mn(2+) is bound by residues Gln-820, Glu-832, and Asn-834. The region spanning Thr-930 to Val-1070 is the MGS-like domain. An allosteric domain region spans residues Thr-930 to Val-1070.

This sequence belongs to the CarB family. As to quaternary structure, composed of two chains; the small (or glutamine) chain promotes the hydrolysis of glutamine to ammonia, which is used by the large (or ammonia) chain to synthesize carbamoyl phosphate. Tetramer of heterodimers (alpha,beta)4. It depends on Mg(2+) as a cofactor. Mn(2+) serves as cofactor.

It carries out the reaction hydrogencarbonate + L-glutamine + 2 ATP + H2O = carbamoyl phosphate + L-glutamate + 2 ADP + phosphate + 2 H(+). It catalyses the reaction hydrogencarbonate + NH4(+) + 2 ATP = carbamoyl phosphate + 2 ADP + phosphate + 2 H(+). It functions in the pathway amino-acid biosynthesis; L-arginine biosynthesis; carbamoyl phosphate from bicarbonate: step 1/1. It participates in pyrimidine metabolism; UMP biosynthesis via de novo pathway; (S)-dihydroorotate from bicarbonate: step 1/3. In terms of biological role, large subunit of the glutamine-dependent carbamoyl phosphate synthetase (CPSase). CPSase catalyzes the formation of carbamoyl phosphate from the ammonia moiety of glutamine, carbonate, and phosphate donated by ATP, constituting the first step of 2 biosynthetic pathways, one leading to arginine and/or urea and the other to pyrimidine nucleotides. The large subunit (synthetase) binds the substrates ammonia (free or transferred from glutamine from the small subunit), hydrogencarbonate and ATP and carries out an ATP-coupled ligase reaction, activating hydrogencarbonate by forming carboxy phosphate which reacts with ammonia to form carbamoyl phosphate. This chain is Carbamoyl phosphate synthase large chain, found in Listeria monocytogenes serotype 4b (strain CLIP80459).